Consider the following 154-residue polypeptide: 3-hydroxyacyl-[acyl-carrier-protein] dehydratase FabZ (154 aa).

The active site involves His58.

Belongs to the thioester dehydratase family. FabZ subfamily.

It is found in the cytoplasm. It carries out the reaction a (3R)-hydroxyacyl-[ACP] = a (2E)-enoyl-[ACP] + H2O. Involved in unsaturated fatty acids biosynthesis. Catalyzes the dehydration of short chain beta-hydroxyacyl-ACPs and long chain saturated and unsaturated beta-hydroxyacyl-ACPs. This is 3-hydroxyacyl-[acyl-carrier-protein] dehydratase FabZ from Protochlamydia amoebophila (strain UWE25).